The following is a 312-amino-acid chain: MERFLRLGGLGGNLGTFGANPQDSNQVDTSETVYISSLALLKMLKHGRAGVPMEVMGLMLGEFVDDYTVNVIDVFAMPQSGTGVSVEAVDPVFQAKMLDMLKQTGRPEMVVGWYHSHPGFGCWLSGVDINTQQSFEALSDRAVAVVVDPIQSVKGKVVIDAFRTINPQSMALNQEPRQTTSNLGHLQKPSIQALIHGLNRHYYSIPIAYRTHDLEQKMLLNLNKLSWMDAVSVENYSKCGEQNKEHLKAMLKLAKNYKKALEDEKNMTDQELAIKNVGKMDPKRHIADEVSKMLNDNIVQSLAGMMATTSLQ.

The MPN domain maps to 33-168 (VYISSLALLK…IDAFRTINPQ (136 aa)). 3 residues coordinate Zn(2+): His115, His117, and Asp128. Residues 115–128 (HSHPGFGCWLSGVD) carry the JAMM motif motif.

This sequence belongs to the peptidase M67A family. PSMD14 subfamily. In terms of assembly, component of the 19S regulatory cap of the 26S proteasome.

Functionally, metalloprotease component of the 26S proteasome that specifically cleaves 'Lys-63'-linked polyubiquitin chains. The 26S proteasome is involved in the ATP-dependent degradation of ubiquitinated proteins. The function of the 'Lys-63'-specific deubiquitination of the proteasome is unclear. This is 26S proteasome non-ATPase regulatory subunit 14 (rpn-11) from Caenorhabditis elegans.